A 151-amino-acid polypeptide reads, in one-letter code: Cytochrome c oxidase-assembly factor COX23, mitochondrial (151 aa).

A mitochondrion-targeting transit peptide spans 1 to 10; the sequence is MEKPSPTRRQ. The segment at 1–86 is disordered; sequence MEKPSPTRRQ…QYYPDDPENP (86 aa). Polar residues predominate over residues 7-18; sequence TRRQTSSLSTIS. Low complexity predominate over residues 19–51; the sequence is NGMTMTNDNRDTTNTNSGSTSSNNSQPSSSSTP. Residues 101-143 form the CHCH domain; it reads YDPCEESSKLSFQCLERNDYDRSKCQEYFDAYRECKKQWLTAR. Short sequence motifs (cx9C motif) lie at residues 104 to 114 and 125 to 135; these read CEESSKLSFQC and CQEYFDAYREC. Disulfide bonds link cysteine 104/cysteine 135 and cysteine 114/cysteine 125.

Belongs to the COX23 family.

It is found in the cytoplasm. The protein resides in the mitochondrion intermembrane space. Functionally, required for the assembly of cytochrome c oxidase. This chain is Cytochrome c oxidase-assembly factor COX23, mitochondrial (COX23), found in Saccharomyces cerevisiae (strain ATCC 204508 / S288c) (Baker's yeast).